A 112-amino-acid chain; its full sequence is UPF0102 protein CFF8240_0294 (112 aa).

Belongs to the UPF0102 family.

The polypeptide is UPF0102 protein CFF8240_0294 (Campylobacter fetus subsp. fetus (strain 82-40)).